A 91-amino-acid polypeptide reads, in one-letter code: Insertion element IS1 2 protein InsA (91 aa).

Belongs to the IS1 elements InsA family.

Absolutely required for transposition of IS1. The chain is Insertion element IS1 2 protein InsA (insA2) from Escherichia coli (strain K12).